Reading from the N-terminus, the 843-residue chain is Receptor-like serine/threonine-protein kinase SD1-7 (843 aa).

The first 31 residues, 1-31 (MRSVPNYHHSFFIFLILILFLAFSVSPNTLS), serve as a signal peptide directing secretion. The 120-residue stretch at 32-151 (ATESLTISSN…NNRLLWQSFD (120 aa)) folds into the Bulb-type lectin domain. Residues 32–435 (ATESLTISSN…LEDKRIKNEK (404 aa)) are Extracellular-facing. N41, N92, N116, N236, and N251 each carry an N-linked (GlcNAc...) asparagine glycan. In terms of domain architecture, EGF-like; atypical spans 286-322 (PKDLCDNYKVCGNFGYCDSNSLPNCYCIKGFKPVNEQ). Cystine bridges form between C290-C302, C296-C310, C372-C397, and C376-C382. Residues 341–422 (CDGRDGFTRL…GGQDLYVRLA (82 aa)) enclose the PAN domain. Residue N381 is glycosylated (N-linked (GlcNAc...) asparagine). A helical membrane pass occupies residues 436–456 (IIGSSIGVSILLLLSFVIFHF). At 457–843 (WKRKQKRSIT…QITLSVIDAR (387 aa)) the chain is on the cytoplasmic side. Residues 519–809 (FSNDNKLGQG…AIPQPKRPGF (291 aa)) form the Protein kinase domain. ATP-binding positions include 525–533 (LGQGGFGIV) and K547. The residue at position 553 (S553) is a Phosphoserine. The tract at residues 608-625 (TRSSNLNWQKRFDIINGI) is caM-binding. D644 functions as the Proton acceptor in the catalytic mechanism. S648 and S661 each carry phosphoserine. Position 678 is a phosphothreonine (T678). S820 carries the phosphoserine modification.

This sequence belongs to the protein kinase superfamily. Ser/Thr protein kinase family. In terms of assembly, interacts with PUB9, PUB13, PUB14 and PUB38. Autophosphorylated on serine and threonine residues. As to expression, mostly expressed in leaves, and, to a lower extent, in stems and flower buds.

The protein localises to the cell membrane. The catalysed reaction is L-seryl-[protein] + ATP = O-phospho-L-seryl-[protein] + ADP + H(+). It carries out the reaction L-threonyl-[protein] + ATP = O-phospho-L-threonyl-[protein] + ADP + H(+). Functionally, involved in the regulation of cellular expansion and differentiation. Mediates subcellular relocalization of PUB9 from nucleus to plasma membrane in a protein-phosphorylation-dependent manner. May be involved in the abscisic acid-mediated signaling pathway, at least during germination. The sequence is that of Receptor-like serine/threonine-protein kinase SD1-7 (SD17) from Arabidopsis thaliana (Mouse-ear cress).